The primary structure comprises 310 residues: Capsid assembly scaffolding protein (310 aa).

A disordered region spans residues 46–102 (VLSDEPTSHNDDPYAAGVDPFADGEDDEGRIQVRISEDGNEAGFDTDGDNSEVETEG). The span at 83 to 102 (DGNEAGFDTDGDNSEVETEG) shows a compositional bias: acidic residues.

This sequence belongs to the T7likevirus capsid assembly scaffolding protein family.

In terms of biological role, scaffolding protein involved in the icosahedric procapsid assembly. Coassembles with the capsid proteins to form the procapsid, in which the scaffolding protein is found within the external shell of icosahedrally arranged capsid protein subunits. In a subsequent step the scaffolding protein molecules are released from the procapsid. Facilitates assembly by binding to gp10 hexamers but not the pentamers and locking them into a morphogenically correct conformation. The polypeptide is Capsid assembly scaffolding protein (9) (Enterobacteria phage T3 (Bacteriophage T3)).